Reading from the N-terminus, the 179-residue chain is MQQNIIKVIVGSKNPVKINAAANAMALLFPDYEIQTQGMDAPSGVPAQPMTDSDTRQGAINRVHYCQQQIEADYYFAMEGGVDCFEFGPATFAYIAIAHQARLSIGRGALLPLPMQVYQALEAGEELGHVMDRLFNTVNIKQKGGAIGLLTHGHATRESNYTQAIILAMAPFLNPELYP.

Residue Glu-71 coordinates Mg(2+). Residue 71-72 (EA) coordinates substrate.

It belongs to the YjjX NTPase family. In terms of assembly, homodimer. Mg(2+) is required as a cofactor. Mn(2+) serves as cofactor.

The catalysed reaction is XTP + H2O = XDP + phosphate + H(+). The enzyme catalyses ITP + H2O = IDP + phosphate + H(+). Its function is as follows. Phosphatase that hydrolyzes non-canonical purine nucleotides such as XTP and ITP to their respective diphosphate derivatives. Probably excludes non-canonical purines from DNA/RNA precursor pool, thus preventing their incorporation into DNA/RNA and avoiding chromosomal lesions. This is Inosine/xanthosine triphosphatase from Shewanella sp. (strain ANA-3).